We begin with the raw amino-acid sequence, 120 residues long: NADH-quinone oxidoreductase subunit A (120 aa).

3 helical membrane passes run 10 to 30, 65 to 85, and 89 to 109; these read ILVF…MGWF, VAIL…WAVV, and IGWF…VGFI.

It belongs to the complex I subunit 3 family. As to quaternary structure, NDH-1 is composed of 14 different subunits. Subunits NuoA, H, J, K, L, M, N constitute the membrane sector of the complex.

It is found in the cell inner membrane. It catalyses the reaction a quinone + NADH + 5 H(+)(in) = a quinol + NAD(+) + 4 H(+)(out). In terms of biological role, NDH-1 shuttles electrons from NADH, via FMN and iron-sulfur (Fe-S) centers, to quinones in the respiratory chain. The immediate electron acceptor for the enzyme in this species is believed to be ubiquinone. Couples the redox reaction to proton translocation (for every two electrons transferred, four hydrogen ions are translocated across the cytoplasmic membrane), and thus conserves the redox energy in a proton gradient. This Coxiella burnetii (strain Dugway 5J108-111) protein is NADH-quinone oxidoreductase subunit A.